Consider the following 186-residue polypeptide: Serine hydrolase RBBP9 (186 aa).

Residues 63 to 67 are involved in binding to RB1; sequence LHCDE. Residues S75, D138, and H165 each act as charge relay system in the active site.

It belongs to the RBBP9 family. Interacts with RB1; the interaction disrupts RB1 binding to E2F1. Interacts with RBL1 and RBL2. Highly expressed in the spleen, testis and kidney. Also found in the heart, liver, lung and brain.

The catalysed reaction is valacyclovir + H2O = acyclovir + L-valine + H(+). Functionally, serine hydrolase. Catalyzes the hydrolytic activation of amino acid ester of the antiviral prodrug valacyclovir to its corresponding active drug, acyclovir. May negatively regulate basal or autocrine TGF-beta signaling by suppressing SMAD2-SMAD3 phosphorylation. May play a role in the transformation process due to its capacity to confer resistance to the growth-inhibitory effects of TGF-beta through interaction with RB1 and the subsequent displacement of E2F1. The sequence is that of Serine hydrolase RBBP9 from Rattus norvegicus (Rat).